A 236-amino-acid polypeptide reads, in one-letter code: MFRRRGVTLTKALLTAVCMLAAPLTQAISVGNLTFSLPSETDFVSKRVVNNNKSARIYRIAISAIDSPGSSELRTRPVDGELLFAPRQLALQAGESEYFKFYYHGPRDNRERYYRVSFREVPTRNHTRRSPTGGVVSTEPVVVMDTILVVRPRQVQFKWSFDKVTGTVSNTGNTWFKLLIKPGCDSTEEEGDAWYLRPGDVVHQPELRQPGNHYLVYNDKFIKISDSCPAKPPSAD.

Residues 1-27 (MFRRRGVTLTKALLTAVCMLAAPLTQA) form the signal peptide.

Belongs to the EcpB/EcpE family.

Part of the ecpRABCDE operon, which encodes the E.coli common pilus (ECP). ECP is found in both commensal and pathogenic strains and plays a dual role in early-stage biofilm development and host cell recognition. This is Probable fimbrial chaperone EcpE (ecpE) from Escherichia coli (strain K12).